The chain runs to 695 residues: Probable rhamnogalacturonate lyase C (695 aa).

The signal sequence occupies residues 1 to 21 (MFLPSRKALAFLACLASHSVA). N-linked (GlcNAc...) asparagine glycosylation is found at N28, N96, N118, N144, N199, N285, N532, and N638.

Belongs to the polysaccharide lyase 4 family.

It is found in the secreted. It carries out the reaction Endotype eliminative cleavage of L-alpha-rhamnopyranosyl-(1-&gt;4)-alpha-D-galactopyranosyluronic acid bonds of rhamnogalacturonan I domains in ramified hairy regions of pectin leaving L-rhamnopyranose at the reducing end and 4-deoxy-4,5-unsaturated D-galactopyranosyluronic acid at the non-reducing end.. In terms of biological role, pectinolytic enzymes consist of four classes of enzymes: pectin lyase, polygalacturonase, pectin methylesterase and rhamnogalacturonase. Degrades the rhamnogalacturonan I (RG-I) backbone of pectin. This is Probable rhamnogalacturonate lyase C (rglC) from Aspergillus oryzae (strain ATCC 42149 / RIB 40) (Yellow koji mold).